We begin with the raw amino-acid sequence, 364 residues long: Chorismate synthase (364 aa).

An NADP(+)-binding site is contributed by Arg47. Residues 125-127, Gly285, 300-304, and Arg327 contribute to the FMN site; these read RFS and KPTPS.

It belongs to the chorismate synthase family. In terms of assembly, homotetramer. FMNH2 is required as a cofactor.

The catalysed reaction is 5-O-(1-carboxyvinyl)-3-phosphoshikimate = chorismate + phosphate. It participates in metabolic intermediate biosynthesis; chorismate biosynthesis; chorismate from D-erythrose 4-phosphate and phosphoenolpyruvate: step 7/7. Catalyzes the anti-1,4-elimination of the C-3 phosphate and the C-6 proR hydrogen from 5-enolpyruvylshikimate-3-phosphate (EPSP) to yield chorismate, which is the branch point compound that serves as the starting substrate for the three terminal pathways of aromatic amino acid biosynthesis. This reaction introduces a second double bond into the aromatic ring system. The polypeptide is Chorismate synthase (Dehalococcoides mccartyi (strain ATCC BAA-2100 / JCM 16839 / KCTC 5957 / BAV1)).